The sequence spans 356 residues: Histidinol-phosphate aminotransferase (356 aa).

Lysine 214 is subject to N6-(pyridoxal phosphate)lysine.

It belongs to the class-II pyridoxal-phosphate-dependent aminotransferase family. Histidinol-phosphate aminotransferase subfamily. As to quaternary structure, homodimer. The cofactor is pyridoxal 5'-phosphate.

It catalyses the reaction L-histidinol phosphate + 2-oxoglutarate = 3-(imidazol-4-yl)-2-oxopropyl phosphate + L-glutamate. It functions in the pathway amino-acid biosynthesis; L-histidine biosynthesis; L-histidine from 5-phospho-alpha-D-ribose 1-diphosphate: step 7/9. The polypeptide is Histidinol-phosphate aminotransferase (Escherichia coli O17:K52:H18 (strain UMN026 / ExPEC)).